An 865-amino-acid polypeptide reads, in one-letter code: NBPF family member NBPF11 (865 aa).

The stretch at 70-130 (MLRNERQFKE…RSLNEHLQAL (61 aa)) forms a coiled coil. The tract at residues 161–200 (KLSPENDEDEDEDVQVEEDEKVLESSAPREVQKAEESKVP) is disordered. Residues 165–181 (ENDEDEDEDVQVEEDEK) are compositionally biased toward acidic residues. Residues 165–259 (ENDEDEDEDV…GCQDALNILP (95 aa)) enclose the Olduvai 1 domain. Basic and acidic residues predominate over residues 190 to 200 (EVQKAEESKVP). The stretch at 339-401 (KSMLRNERQF…RSLNEHLQAL (63 aa)) forms a coiled coil. Olduvai domains lie at 436–528 (ENDN…HIIP), 529–617 (ENES…ATGP), 620–675 (SREL…VDMD), 676–767 (EIEK…PPCP), and 770–865 (SREL…SAAC). Disordered regions lie at residues 450 to 475 (AEKVQKSSSPREMQKAEEKEVPEDSL) and 520 to 567 (WEDA…GYST). Composition is skewed to acidic residues over residues 530–539 (NESDDEEEEE) and 550–562 (ESEEEEVPQESWD). The disordered stretch occupies residues 829–865 (RGRGRKEGEEDQRRKEEGEEKKGKKIKTHHAPGSAAC). Basic and acidic residues predominate over residues 833–850 (RKEGEEDQRRKEEGEEKK).

Belongs to the NBPF family. In terms of tissue distribution, expressed in spinal cord.

The protein localises to the cytoplasm. The protein is NBPF family member NBPF11 of Homo sapiens (Human).